The chain runs to 121 residues: Type II secretion system protein I (121 aa).

The propeptide at 1–6 (MNKQKG) is leader sequence. The residue at position 7 (Met7) is an N-methylmethionine. The chain crosses the membrane as a helical span at residues 7 to 27 (MTLLEVLVALAIFSLAGLTLL).

This sequence belongs to the GSP I family. In terms of assembly, type II secretion is composed of four main components: the outer membrane complex, the inner membrane complex, the cytoplasmic secretion ATPase and the periplasm-spanning pseudopilus. Interacts with core component PulG. Interacts with pseudopilins PulJ and PulK. Cleaved by prepilin peptidase. Post-translationally, methylated by prepilin peptidase at the amino group of the N-terminal methionine once the leader sequence is cleaved by prepilin peptidase.

It localises to the cell inner membrane. Its function is as follows. Component of the type II secretion system required for the energy-dependent secretion of extracellular factors such as proteases and toxins from the periplasm. Part of the pseudopilus tip complex that is critical for the recognition and binding of secretion substrates. The chain is Type II secretion system protein I (pulI) from Klebsiella michiganensis (strain ATCC 8724 / DSM 4798 / JCM 20051 / NBRC 3318 / NRRL B-199 / KCTC 1686 / BUCSAV 143 / CCM 1901).